The primary structure comprises 84 residues: Small ribosomal subunit protein bS18 (84 aa).

Belongs to the bacterial ribosomal protein bS18 family. As to quaternary structure, part of the 30S ribosomal subunit. Forms a tight heterodimer with protein bS6.

Functionally, binds as a heterodimer with protein bS6 to the central domain of the 16S rRNA, where it helps stabilize the platform of the 30S subunit. This Mycobacterium leprae (strain Br4923) protein is Small ribosomal subunit protein bS18.